We begin with the raw amino-acid sequence, 248 residues long: Carboxy-S-adenosyl-L-methionine synthase (248 aa).

S-adenosyl-L-methionine-binding positions include Tyr40, Gly65 to Ser67, Asp95 to Asn96, Asp123 to Ile124, Asn138, and Arg205.

Belongs to the class I-like SAM-binding methyltransferase superfamily. Cx-SAM synthase family. Homodimer.

The enzyme catalyses prephenate + S-adenosyl-L-methionine = carboxy-S-adenosyl-L-methionine + 3-phenylpyruvate + H2O. Functionally, catalyzes the conversion of S-adenosyl-L-methionine (SAM) to carboxy-S-adenosyl-L-methionine (Cx-SAM). The polypeptide is Carboxy-S-adenosyl-L-methionine synthase (Hahella chejuensis (strain KCTC 2396)).